The sequence spans 439 residues: GTPase Obg (439 aa).

The Obg domain maps to 3-162 (GEFYDSARIF…REIELELKLL (160 aa)). Positions 163–333 (ADVGLIGFPN…LLQRVAERLR (171 aa)) constitute an OBG-type G domain. Residues 169–176 (GFPNAGKS), 194–198 (FTTLQ), 215–218 (DIPG), 285–288 (NKAD), and 314–316 (SAA) each bind GTP. 2 residues coordinate Mg(2+): Ser-176 and Thr-196. Residues 351 to 428 (VPEVDERLYT…IEQAAFDWED (78 aa)) form the OCT domain.

The protein belongs to the TRAFAC class OBG-HflX-like GTPase superfamily. OBG GTPase family. Monomer. Mg(2+) serves as cofactor.

The protein resides in the cytoplasm. An essential GTPase which binds GTP, GDP and possibly (p)ppGpp with moderate affinity, with high nucleotide exchange rates and a fairly low GTP hydrolysis rate. Plays a role in control of the cell cycle, stress response, ribosome biogenesis and in those bacteria that undergo differentiation, in morphogenesis control. In Roseiflexus castenholzii (strain DSM 13941 / HLO8), this protein is GTPase Obg.